The chain runs to 429 residues: Xaa-Pro dipeptidase (429 aa).

Asp-241, Asp-252, His-334, Glu-372, and Glu-411 together coordinate Mn(2+).

The protein belongs to the peptidase M24B family. Bacterial-type prolidase subfamily. It depends on Mn(2+) as a cofactor.

It carries out the reaction Xaa-L-Pro dipeptide + H2O = an L-alpha-amino acid + L-proline. Splits dipeptides with a prolyl residue in the C-terminal position. This Marinobacter nauticus (strain ATCC 700491 / DSM 11845 / VT8) (Marinobacter aquaeolei) protein is Xaa-Pro dipeptidase.